We begin with the raw amino-acid sequence, 104 residues long: Pyrimidine/purine nucleoside phosphorylase (104 aa).

It belongs to the nucleoside phosphorylase PpnP family.

The enzyme catalyses a purine D-ribonucleoside + phosphate = a purine nucleobase + alpha-D-ribose 1-phosphate. It catalyses the reaction adenosine + phosphate = alpha-D-ribose 1-phosphate + adenine. It carries out the reaction cytidine + phosphate = cytosine + alpha-D-ribose 1-phosphate. The catalysed reaction is guanosine + phosphate = alpha-D-ribose 1-phosphate + guanine. The enzyme catalyses inosine + phosphate = alpha-D-ribose 1-phosphate + hypoxanthine. It catalyses the reaction thymidine + phosphate = 2-deoxy-alpha-D-ribose 1-phosphate + thymine. It carries out the reaction uridine + phosphate = alpha-D-ribose 1-phosphate + uracil. The catalysed reaction is xanthosine + phosphate = alpha-D-ribose 1-phosphate + xanthine. Catalyzes the phosphorolysis of diverse nucleosides, yielding D-ribose 1-phosphate and the respective free bases. Can use uridine, adenosine, guanosine, cytidine, thymidine, inosine and xanthosine as substrates. Also catalyzes the reverse reactions. The polypeptide is Pyrimidine/purine nucleoside phosphorylase (Leptothrix cholodnii (strain ATCC 51168 / LMG 8142 / SP-6) (Leptothrix discophora (strain SP-6))).